The following is a 238-amino-acid chain: Probable amino-acid ABC transporter permease protein y4tF (238 aa).

The ABC transmembrane type-1 domain occupies 29-223 (AWVTIQFTLY…GIALVLSFFM (195 aa)). 5 helical membrane-spanning segments follow: residues 33–53 (IQFT…FGIG), 77–97 (LLVQ…MMGI), 103–123 (PVVA…AEIV), 152–172 (VALP…AIAA), and 203–223 (TVYT…SFFM).

This sequence belongs to the binding-protein-dependent transport system permease family. HisMQ subfamily.

The protein localises to the cell inner membrane. Its function is as follows. Probably part of the binding-protein-dependent transport system y4tEFGH for an amino acid. Probably responsible for the translocation of the substrate across the membrane. This Sinorhizobium fredii (strain NBRC 101917 / NGR234) protein is Probable amino-acid ABC transporter permease protein y4tF.